We begin with the raw amino-acid sequence, 560 residues long: 2-succinyl-5-enolpyruvyl-6-hydroxy-3-cyclohexene-1-carboxylate synthase (560 aa).

Belongs to the TPP enzyme family. MenD subfamily. In terms of assembly, homodimer. It depends on Mg(2+) as a cofactor. The cofactor is Mn(2+). Thiamine diphosphate serves as cofactor.

The enzyme catalyses isochorismate + 2-oxoglutarate + H(+) = 5-enolpyruvoyl-6-hydroxy-2-succinyl-cyclohex-3-ene-1-carboxylate + CO2. Its pathway is quinol/quinone metabolism; 1,4-dihydroxy-2-naphthoate biosynthesis; 1,4-dihydroxy-2-naphthoate from chorismate: step 2/7. It participates in quinol/quinone metabolism; menaquinone biosynthesis. Its function is as follows. Catalyzes the thiamine diphosphate-dependent decarboxylation of 2-oxoglutarate and the subsequent addition of the resulting succinic semialdehyde-thiamine pyrophosphate anion to isochorismate to yield 2-succinyl-5-enolpyruvyl-6-hydroxy-3-cyclohexene-1-carboxylate (SEPHCHC). In Staphylococcus saprophyticus subsp. saprophyticus (strain ATCC 15305 / DSM 20229 / NCIMB 8711 / NCTC 7292 / S-41), this protein is 2-succinyl-5-enolpyruvyl-6-hydroxy-3-cyclohexene-1-carboxylate synthase.